We begin with the raw amino-acid sequence, 471 residues long: 1,3-beta-glucanosyltransferase GAS4 (471 aa).

The first 21 residues, 1 to 21 (MMVFSSTFIFLILELVVLCEA), serve as a signal peptide directing secretion. C70 and C99 are disulfide-bonded. Residue Y88 participates in (1,3-beta-D-glucosyl)n binding. The N-linked (GlcNAc...) asparagine glycan is linked to N151. Positions 160, 161, 203, and 208 each coordinate (1,3-beta-D-glucosyl)n. The active-site Proton donor is E161. 2 disulfide bridges follow: C217-C354 and C238-C269. Catalysis depends on E266, which acts as the Nucleophile. Y298 contributes to the (1,3-beta-D-glucosyl)n binding site. A glycan (N-linked (GlcNAc...) asparagine) is linked at N398. Residue N447 is the site of GPI-anchor amidated asparagine attachment. Residues 448–471 (SASISGPLLPLGLCLLFFTFSLFF) constitute a propeptide, removed in mature form.

This sequence belongs to the glycosyl hydrolase 72 family.

Its subcellular location is the cell membrane. In terms of biological role, splits internally a 1,3-beta-glucan molecule and transfers the newly generated reducing end (the donor) to the non-reducing end of another 1,3-beta-glucan molecule (the acceptor) forming a 1,3-beta linkage, resulting in the elongation of 1,3-beta-glucan chains in the cell wall. Involved in spore wall assembly. This is 1,3-beta-glucanosyltransferase GAS4 (GAS4) from Saccharomyces cerevisiae (strain ATCC 204508 / S288c) (Baker's yeast).